The sequence spans 391 residues: MTEEFNESMINDIKEGDKVTGEVQQVEDKQVVVHINGGKFNGIIPISQLSTHHIDSPSEVVKEGDEVEAYVTKVEFDEENETGAYILSRRQLETEKSYSYLQEKLDNNEIIEAKVTEVVKGGLVVDVGQRGFVPASLISTDFIEDFSVFDGQTIRIKVEELDPENNRVILSRKAVEQEENDAKKDQLLQSLNEGDVIHGKVARLTQFGAFIDIGGVDGLVHVSELSHEHVQTPEEVVSIGQDVKVKIKSIDRDTERISLSIKDTLPTPFENIKGQFHENDVIEGVVVRLANFGAFVEIAPGVQGLVHISEIAHKHIGTPGEVLEPGQQVNVKILGIDEENERVSLSIKATLPNEDVVESDPSTTKAYLENEEEDNPTIGDMIGDKLKNLKL.

4 S1 motif domains span residues 16 to 90 (GDKV…LSRR), 108 to 173 (NEII…LSRK), 194 to 262 (GDVI…LSIK), and 279 to 348 (NDVI…LSIK).

It belongs to the bacterial ribosomal protein bS1 family.

Binds mRNA; thus facilitating recognition of the initiation point. It is needed to translate mRNA with a short Shine-Dalgarno (SD) purine-rich sequence. In Staphylococcus aureus (strain N315), this protein is Small ribosomal subunit protein bS1 (rpsA).